Consider the following 163-residue polypeptide: MPQVVEVLVEGGKASPGPPLGPAIGPLGLNVKQVVDEINKATKDFEGMQVPVKIIVEDPKKKTFRIEVGVPPVSQLIKKELGIPKGSSEAGHSPVGNLTMEQVIRIAKAKMDQMLAADLKAAAKEVIGTALSMGVTVEGKDPREVQKEIDEGVYDEIFANAEE.

The protein belongs to the universal ribosomal protein uL11 family. Part of the ribosomal stalk of the 50S ribosomal subunit. Interacts with L10 and the large rRNA to form the base of the stalk. L10 forms an elongated spine to which L12 dimers bind in a sequential fashion forming a multimeric L10(L12)X complex.

In terms of biological role, forms part of the ribosomal stalk which helps the ribosome interact with GTP-bound translation factors. This Thermococcus onnurineus (strain NA1) protein is Large ribosomal subunit protein uL11.